The primary structure comprises 468 residues: ATP synthase subunit beta (468 aa).

Residue 155–162 (GGAGVGKT) coordinates ATP.

Belongs to the ATPase alpha/beta chains family. F-type ATPases have 2 components, CF(1) - the catalytic core - and CF(0) - the membrane proton channel. CF(1) has five subunits: alpha(3), beta(3), gamma(1), delta(1), epsilon(1). CF(0) has three main subunits: a(1), b(2) and c(9-12). The alpha and beta chains form an alternating ring which encloses part of the gamma chain. CF(1) is attached to CF(0) by a central stalk formed by the gamma and epsilon chains, while a peripheral stalk is formed by the delta and b chains.

The protein localises to the cell membrane. The enzyme catalyses ATP + H2O + 4 H(+)(in) = ADP + phosphate + 5 H(+)(out). Functionally, produces ATP from ADP in the presence of a proton gradient across the membrane. The catalytic sites are hosted primarily by the beta subunits. This Streptococcus suis (strain 98HAH33) protein is ATP synthase subunit beta.